The chain runs to 102 residues: ATP-dependent Clp protease adapter protein ClpS (102 aa).

Belongs to the ClpS family. As to quaternary structure, binds to the N-terminal domain of the chaperone ClpA.

Its function is as follows. Involved in the modulation of the specificity of the ClpAP-mediated ATP-dependent protein degradation. The chain is ATP-dependent Clp protease adapter protein ClpS from Dechloromonas aromatica (strain RCB).